We begin with the raw amino-acid sequence, 227 residues long: Isopentenyl-diphosphate Delta-isomerase 1 (227 aa).

A substrate-binding site is contributed by Lys-36. Residues His-40 and His-51 each contribute to the Mg(2+) site. The 151-residue stretch at 49 to 199 (LLHRAFSVFL…EIKITPWFKI (151 aa)) folds into the Nudix hydrolase domain. 2 residues coordinate substrate: Arg-70 and Lys-74. Cys-86 is an active-site residue. Ser-87 lines the substrate pocket. Positions 146 and 148 each coordinate Mg(2+). Glu-148 is a catalytic residue. At Lys-176 the chain carries N6-acetyllysine. A Microbody targeting signal motif is present at residues 225–227 (YRM).

This sequence belongs to the IPP isomerase type 1 family. As to quaternary structure, monomer. It depends on Mg(2+) as a cofactor.

The protein localises to the peroxisome. The enzyme catalyses isopentenyl diphosphate = dimethylallyl diphosphate. The protein operates within isoprenoid biosynthesis; dimethylallyl diphosphate biosynthesis; dimethylallyl diphosphate from isopentenyl diphosphate: step 1/1. Its function is as follows. Catalyzes the 1,3-allylic rearrangement of the homoallylic substrate isopentenyl (IPP) to its highly electrophilic allylic isomer, dimethylallyl diphosphate (DMAPP). In Homo sapiens (Human), this protein is Isopentenyl-diphosphate Delta-isomerase 1 (IDI1).